Reading from the N-terminus, the 221-residue chain is Ribonuclease 3 (221 aa).

In terms of domain architecture, RNase III spans 1–123 (MERTGHAFAD…LIAVLYLDGG (123 aa)). Glutamate 36 contributes to the Mg(2+) binding site. Aspartate 40 is an active-site residue. 2 residues coordinate Mg(2+): aspartate 109 and glutamate 112. Glutamate 112 is a catalytic residue. The DRBM domain occupies 148–217 (DAKTELQEWA…AAALLLREGV (70 aa)).

The protein belongs to the ribonuclease III family. Homodimer. The cofactor is Mg(2+).

Its subcellular location is the cytoplasm. It catalyses the reaction Endonucleolytic cleavage to 5'-phosphomonoester.. In terms of biological role, digests double-stranded RNA. Involved in the processing of primary rRNA transcript to yield the immediate precursors to the large and small rRNAs (23S and 16S). Processes some mRNAs, and tRNAs when they are encoded in the rRNA operon. Processes pre-crRNA and tracrRNA of type II CRISPR loci if present in the organism. This Mesorhizobium japonicum (strain LMG 29417 / CECT 9101 / MAFF 303099) (Mesorhizobium loti (strain MAFF 303099)) protein is Ribonuclease 3.